Consider the following 176-residue polypeptide: Peptide methionine sulfoxide reductase B3 (176 aa).

The first 26 residues, 1-26, serve as a signal peptide directing secretion; that stretch reads MNIVNSKILFLSFTLLLLLQSSIVES. The MsrB domain occupies 51–172; the sequence is DEEWRAILSP…NSVSLKFTPA (122 aa). Cysteine 90, cysteine 93, cysteine 136, and cysteine 139 together coordinate Zn(2+). Cysteine 108 and cysteine 161 are oxidised to a cystine. The active-site Nucleophile is cysteine 161.

It belongs to the MsrB Met sulfoxide reductase family. It depends on Zn(2+) as a cofactor.

Its subcellular location is the endoplasmic reticulum. It carries out the reaction L-methionyl-[protein] + [thioredoxin]-disulfide + H2O = L-methionyl-(R)-S-oxide-[protein] + [thioredoxin]-dithiol. Functionally, catalyzes the reduction of methionine sulfoxide (MetSO) to methionine in proteins. Plays a protective role against oxidative stress by restoring activity to proteins that have been inactivated by methionine oxidation. Involved in cold tolerance. Eliminates MetSO and reactive oxygen species that accumulate at the ER during cold acclimation. MSRB family specifically reduces the MetSO R-enantiomer. The sequence is that of Peptide methionine sulfoxide reductase B3 (MSRB3) from Arabidopsis thaliana (Mouse-ear cress).